Here is an 87-residue protein sequence, read N- to C-terminus: Kappa-3-bungarotoxin (87 aa).

An N-terminal signal peptide occupies residues M1–T21. 5 cysteine pairs are disulfide-bonded: C24-C42, C35-C63, C48-C52, C67-C79, and C80-C85.

The protein belongs to the three-finger toxin family. Long-chain subfamily. Kappa-neurotoxin sub-subfamily. Homodimer and heterodimer with kappa 2-bungarotoxin; non-covalently-linked. As to expression, expressed by the venom gland.

The protein localises to the secreted. Functionally, postsynaptic neurotoxin that binds and inhibits neuronal nicotinic acetylcholine receptors (nAChR) with high affinity (IC(50)&lt;100 nM). Is a selective, and slowly reversible antagonist of alpha-3/CHRNA3-containing and some alpha-4/CHRNA4-containing AChRs. This is Kappa-3-bungarotoxin from Bungarus multicinctus (Many-banded krait).